The chain runs to 534 residues: Serine/threonine-protein phosphatase 2B catalytic subunit (534 aa).

Residues aspartate 88, histidine 90, and aspartate 116 each contribute to the Fe cation site. Zn(2+)-binding residues include aspartate 116 and asparagine 148. Histidine 149 functions as the Proton donor in the catalytic mechanism. Zn(2+) is bound by residues histidine 197 and histidine 279. Disordered stretches follow at residues 375 to 398 (LEDETPTSVSPSAPSPPLPMDVES) and 475 to 534 (PSHE…TREA). Basic and acidic residues-rich tracts occupy residues 475-497 (PSHEEVIKRSEEERRAALERAQQ) and 524-534 (QRDAARETREA).

This sequence belongs to the PPP phosphatase family. PP-2B subfamily. As to quaternary structure, composed of two components (A and B), the A component is the catalytic subunit and the B component confers calcium sensitivity. Requires Fe(3+) as cofactor. The cofactor is Zn(2+).

The enzyme catalyses O-phospho-L-seryl-[protein] + H2O = L-seryl-[protein] + phosphate. The catalysed reaction is O-phospho-L-threonyl-[protein] + H2O = L-threonyl-[protein] + phosphate. In terms of biological role, calcium-dependent, calmodulin-stimulated protein phosphatase. This subunit may have a role in the calmodulin activation of calcineurin. The sequence is that of Serine/threonine-protein phosphatase 2B catalytic subunit (cnaA) from Aspergillus fumigatus (strain ATCC MYA-4609 / CBS 101355 / FGSC A1100 / Af293) (Neosartorya fumigata).